The chain runs to 277 residues: Anamorsin homolog (277 aa).

Residues 1-134 are N-terminal SAM-like domain; the sequence is MALQGNVAIL…PFYPEFSDAV (134 aa). Positions 135–191 are linker; that stretch reads SFTSKKQSFESAAIPLAVKSTTTQPIKKWTVLADDFGDDQDDDIIDEDTLLDDTDEV. Residues cysteine 199, cysteine 210, cysteine 213, and cysteine 215 each coordinate [2Fe-2S] cluster. A fe-S binding site A region spans residues 199 to 215; that stretch reads CGDAVGGKKRACKNCTC. [4Fe-4S] cluster-binding residues include cysteine 238, cysteine 241, cysteine 249, and cysteine 252. 2 short sequence motifs (cx2C motif) span residues 238-241 and 249-252; these read CGNC and CGSC. Positions 238 to 252 are fe-S binding site B; that stretch reads CGNCFKGDAFRCGSC.

The protein belongs to the anamorsin family. As to quaternary structure, monomer. Requires [2Fe-2S] cluster as cofactor. [4Fe-4S] cluster serves as cofactor.

The protein resides in the cytoplasm. It localises to the mitochondrion intermembrane space. Component of the cytosolic iron-sulfur (Fe-S) protein assembly (CIA) machinery. Required for the maturation of extramitochondrial Fe-S proteins. Part of an electron transfer chain functioning in an early step of cytosolic Fe-S biogenesis, facilitating the de novo assembly of a [4Fe-4S] cluster on the cytosolic Fe-S scaffold complex. Electrons are transferred from NADPH via a FAD- and FMN-containing diflavin oxidoreductase. Together with the diflavin oxidoreductase, also required for the assembly of the diferric tyrosyl radical cofactor of ribonucleotide reductase (RNR), probably by providing electrons for reduction during radical cofactor maturation in the catalytic small subunit. This Phytophthora infestans (strain T30-4) (Potato late blight agent) protein is Anamorsin homolog.